Reading from the N-terminus, the 474-residue chain is tRNA modification GTPase MnmE (474 aa).

R25, E82, and K123 together coordinate (6S)-5-formyl-5,6,7,8-tetrahydrofolate. Positions 219 to 386 (GIKVVIAGKP…LKKHLYDSAM (168 aa)) constitute a TrmE-type G domain. N229 contacts K(+). Residues 229 to 234 (NAGKSS), 248 to 254 (SNISGTT), and 273 to 276 (DTAG) each bind GTP. Residue S233 coordinates Mg(2+). Residues S248, I250, and T253 each contribute to the K(+) site. T254 lines the Mg(2+) pocket. K474 contacts (6S)-5-formyl-5,6,7,8-tetrahydrofolate.

The protein belongs to the TRAFAC class TrmE-Era-EngA-EngB-Septin-like GTPase superfamily. TrmE GTPase family. As to quaternary structure, homodimer. Heterotetramer of two MnmE and two MnmG subunits. The cofactor is K(+).

It is found in the cytoplasm. Its function is as follows. Exhibits a very high intrinsic GTPase hydrolysis rate. Involved in the addition of a carboxymethylaminomethyl (cmnm) group at the wobble position (U34) of certain tRNAs, forming tRNA-cmnm(5)s(2)U34. In Blochmanniella floridana, this protein is tRNA modification GTPase MnmE.